The sequence spans 488 residues: Retinoic acid receptor RXR-alpha (488 aa).

Residues Met1 to Ile160 are modulating. Residue Lys134 forms a Glycyl lysine isopeptide (Lys-Gly) (interchain with G-Cter in SUMO) linkage. The segment at residues Lys158 to Glu233 is a DNA-binding region (nuclear receptor). 4 residues coordinate Zn(2+): Cys161, Cys164, Cys178, and Cys181. The NR C4-type zinc-finger motif lies at Cys161–Cys181. The tract at residues Lys186–Lys191 is nuclear localization signal. Zn(2+) contacts are provided by Cys197, Cys203, Cys213, and Cys216. The NR C4-type zinc-finger motif lies at Cys197–Cys216. The interval Lys227–Asn250 is hinge. Residues Gln232–Asn244 are compositionally biased toward basic and acidic residues. Residues Gln232–Met256 form a disordered region. Residues Asn253–Pro484 enclose the NR LBD domain. Positions 342 and 353 each coordinate 9-cis-retinoate. Residues Arg342 and Ala353 each coordinate all-trans-retinoate. The required for nuclear export stretch occupies residues Arg374–Gly394. The tract at residues Ile473 to Pro484 is AF-2.

This sequence belongs to the nuclear hormone receptor family. NR2 subfamily. As to quaternary structure, homodimer. Heterodimer; with a rar molecule. Binds DNA preferentially as a rar/rxr heterodimer. Interacts with coactivator ncoa3 and with senp6. In terms of processing, sumoylated on Lys-134; which negatively regulates transcriptional activity. Desumoylated specifically by SENP6.

The protein resides in the nucleus. Functionally, receptor for retinoic acid that acts as a transcription factor. Forms homo- or heterodimers with retinoic acid receptors (rars) and binds to target response elements in response to their ligands, all-trans or 9-cis retinoic acid, to regulate gene expression in various biological processes. The rar/rxr heterodimers bind to the retinoic acid response elements (RARE) composed of tandem 5'-AGGTCA-3' sites known as DR1-DR5 to regulate transcription. The high affinity ligand for rxrs is 9-cis retinoic acid. In the absence of ligand, the rar/rxr heterodimers associate with a multiprotein complex containing transcription corepressors that induce histone deacetylation, chromatin condensation and transcriptional suppression. On ligand binding, the corepressors dissociate from the receptors and coactivators are recruited leading to transcriptional activation. The polypeptide is Retinoic acid receptor RXR-alpha (rxra) (Xenopus laevis (African clawed frog)).